The chain runs to 429 residues: Glucose-6-phosphate isomerase (429 aa).

Glu282 (proton donor) is an active-site residue. Residues His303 and Lys418 contribute to the active site.

It belongs to the GPI family.

The protein localises to the cytoplasm. The enzyme catalyses alpha-D-glucose 6-phosphate = beta-D-fructose 6-phosphate. It participates in carbohydrate biosynthesis; gluconeogenesis. Its pathway is carbohydrate degradation; glycolysis; D-glyceraldehyde 3-phosphate and glycerone phosphate from D-glucose: step 2/4. Functionally, catalyzes the reversible isomerization of glucose-6-phosphate to fructose-6-phosphate. This chain is Glucose-6-phosphate isomerase, found in Mesomycoplasma hyopneumoniae (strain 7448) (Mycoplasma hyopneumoniae).